The following is a 146-amino-acid chain: Ribonuclease H (146 aa).

In terms of domain architecture, RNase H type-1 spans 1-143; the sequence is MQKKIIVYTD…CDELARQAIK (143 aa). Mg(2+)-binding residues include Asp10, Glu48, Asp70, and Asp135.

The protein belongs to the RNase H family. In terms of assembly, monomer. Mg(2+) serves as cofactor.

The protein resides in the cytoplasm. It carries out the reaction Endonucleolytic cleavage to 5'-phosphomonoester.. Functionally, endonuclease that specifically degrades the RNA of RNA-DNA hybrids. This chain is Ribonuclease H, found in Chlorobium phaeobacteroides (strain DSM 266 / SMG 266 / 2430).